Consider the following 82-residue polypeptide: MATSTNSREFLIFICVLTLLVVRSEARLVPMLFSTKEKVMNSKFGLREVINDVRNSEWLRKRALLGGKPERVSPGGPDAQHH.

Residues 1-26 form the signal peptide; the sequence is MATSTNSREFLIFICVLTLLVVRSEA. Residues Pro-74 and Pro-77 each carry the hydroxyproline modification. O-linked (Ara...) hydroxyproline glycosylation occurs at Pro-77.

This sequence belongs to the CLV3/ESR signal peptide family. In terms of processing, the O-glycosylation (arabinosylation) of the hydroxyproline Pro-77 enhances binding affinity of the CLE53p peptide for its receptor. In terms of tissue distribution, expressed in root vasculature.

Its subcellular location is the secreted. It localises to the extracellular space. Functionally, signaling peptide involved in the regulation of root colonization by arbuscular mycorrhizal (AM) fungi. Moves from root to shoot to function with the receptor kinase SUNN, in a signaling pathway that repress strigolactone biosynthetic genes and strigolactone content in the roots, and consequently reduces the promotion of further colonization by AM fungi. The sequence is that of CLAVATA3/ESR (CLE)-related protein 53 from Medicago truncatula (Barrel medic).